The sequence spans 440 residues: Histidinol dehydrogenase (440 aa).

The NAD(+) site is built by Y139, Q200, and N223. Substrate contacts are provided by S246, Q268, and H271. Zn(2+) is bound by residues Q268 and H271. Catalysis depends on proton acceptor residues E336 and H337. Residues H337, D370, E424, and H429 each contribute to the substrate site. A Zn(2+)-binding site is contributed by D370. Residue H429 coordinates Zn(2+).

This sequence belongs to the histidinol dehydrogenase family. Zn(2+) is required as a cofactor.

The catalysed reaction is L-histidinol + 2 NAD(+) + H2O = L-histidine + 2 NADH + 3 H(+). It functions in the pathway amino-acid biosynthesis; L-histidine biosynthesis; L-histidine from 5-phospho-alpha-D-ribose 1-diphosphate: step 9/9. Functionally, catalyzes the sequential NAD-dependent oxidations of L-histidinol to L-histidinaldehyde and then to L-histidine. The chain is Histidinol dehydrogenase from Bordetella bronchiseptica (strain ATCC BAA-588 / NCTC 13252 / RB50) (Alcaligenes bronchisepticus).